Here is a 263-residue protein sequence, read N- to C-terminus: Lens fiber major intrinsic protein (263 aa).

Residues 1-9 lie on the Cytoplasmic side of the membrane; the sequence is MWELRSASF. Residues 10–29 traverse the membrane as a helical segment; that stretch reads WRAIFAEFFATLFYVFFGLG. Topologically, residues 30–41 are extracellular; sequence ASLRWTPGPLHV. A helical transmembrane segment spans residues 42–59; it reads LQVALAFGLALATLVQAV. Residues 60–61 lie on the Cytoplasmic side of the membrane; sequence GH. The discontinuously helical intramembrane region spans 62–77; it reads ISGAHVNPAVTFAFLV. The NPA 1 signature appears at 68–70; it reads NPA. Over 78–82 the chain is Cytoplasmic; sequence GSQMS. A helical membrane pass occupies residues 83 to 106; the sequence is LLRAFCYMAAQLLGAVAGAAVLYS. At 107–127 the chain is on the extracellular side; the sequence is VTPPAVRGNLALNTLHPGVSV. A helical membrane pass occupies residues 128-148; the sequence is GQATTVEIFLTLQFVLCIFAT. Residues 149–156 are Cytoplasmic-facing; it reads YDERRNGR. A helical transmembrane segment spans residues 157–175; sequence LGSVALAVGFSLTLGHLFG. At 176 to 178 the chain is on the extracellular side; it reads MYY. The discontinuously helical intramembrane region spans 179-193; the sequence is TGAGMNPARSFAPAI. Residues 184-186 carry the NPA 2 motif; the sequence is NPA. Over 194–200 the chain is Extracellular; that stretch reads LTRNFTN. Residues 201-222 traverse the membrane as a helical segment; the sequence is HWVYWVGPIIGGGLGSLLYDFL. Topologically, residues 223 to 263 are cytoplasmic; the sequence is LFPRLKSVSERLSILKGARPSDSNGQPEGTGEPVELKTQAL. An interaction with CALM region spans residues 227 to 237; it reads LKSVSERLSIL. Phosphoserine occurs at positions 235, 243, and 245. Positions 240–263 are disordered; the sequence is ARPSDSNGQPEGTGEPVELKTQAL. Asn-246 is subject to Deamidated asparagine.

This sequence belongs to the MIP/aquaporin (TC 1.A.8) family. Homotetramer; each monomer provides an independent water pore. Two homotetramers on opposing membranes can dimerize, forming a cell-cell junction. Interacts with CALM; the calcium-calmodulin/CALM complex interacts with the cytoplasmic domains of two aquaporins, leading to channel closure. Interacts with BFSP1 (via C-terminus); prevents calcium-dependent inhibition of the water channel activity. In terms of processing, subject to partial proteolytic cleavage in the eye lens core. Partial proteolysis promotes interactions between tetramers from adjoining membranes. Fatty acylated at Met-1 and Lys-238. The acyl modifications, in decreasing order of ion abundance, are: oleoyl (C18:1) &gt; palmitoyl (C16:0) &gt; stearoyl (C18:0) &gt; eicosenoyl (C20:1) &gt; dihomo-gamma-linolenoyl (C20:3) &gt; palmitoleoyl (C16:1) &gt; eicosadienoyl (C20:2).

It is found in the cell membrane. The protein resides in the cell junction. The catalysed reaction is H2O(in) = H2O(out). With respect to regulation, the water channel activity is inhibited by calcium through calmodulin/CALM. In terms of biological role, aquaporins form homotetrameric transmembrane channels, with each monomer independently mediating water transport across the plasma membrane along its osmotic gradient. Specifically expressed in lens fiber cells, this aquaporin is crucial for maintaining lens water homeostasis and transparency. Beyond water permeability, it also acts as a cell-to-cell adhesion molecule, forming thin junctions between lens fiber cells that are essential for maintaining the ordered structure and transparency of the lens. This chain is Lens fiber major intrinsic protein, found in Canis lupus familiaris (Dog).